Here is a 392-residue protein sequence, read N- to C-terminus: MKRQALAAMIASLFALAACGGEQAAQAPAETPAASAEAASSAAQATAETPAGELPVIDAVTTHAPEVPPAIDRDYPAKVRVKMETVEKTMKMDDGVEYRYWTFDGDVPGRMIRVREGDTVEVEFSNNPSSTVPHNVDFHAATGQGGGAAATFTAPGRTSTFSFKALQPGLYIYHCAVAPVGMHIANGMYGLILVEPKEGLPKVDKEFYIVQGDFYTKGKKGAQGLQPFDMDKAVAEQPEYVVFNGHVGSIAGDNALKAKAGETVRMYVGNGGPNLVSSFHVIGEIFDKVYVEGGKLINENVQSTIVPAGGSAIVEFKVDIPGSYTLVDHSIFRAFNKGALGQLKVEGAENPEIMTQKLSDTAYAGSGAASAPAASAPAASAPAASASEKSVY.

An N-terminal signal peptide occupies residues 1 to 18 (MKRQALAAMIASLFALAA). Residue Cys19 is the site of N-palmitoyl cysteine attachment. A lipid anchor (S-diacylglycerol cysteine) is attached at Cys19. Positions 30–49 (ETPAASAEAASSAAQATAET) are disordered. 2 Plastocyanin-like domains span residues 101-195 (WTFD…ILVE) and 245-346 (GHVG…LKVE). Residues His134, His139, His174, Cys175, His183, and Met188 each coordinate Cu cation. His139 contacts substrate. His280 is a binding site for substrate. His329 is a binding site for Cu cation. A disordered region spans residues 367–392 (GAASAPAASAPAASAPAASASEKSVY). Tandem repeats lie at residues 368–372 (AASAP), 373–377 (AASAP), 378–382 (AASAP), and 383–387 (AASAS). Residues 368 to 387 (AASAPAASAPAASAPAASAS) form a 4 X 5 AA tandem repeats of A-A-S-A-P region.

The protein belongs to the multicopper oxidase family. As to quaternary structure, homotrimer. Requires Cu(+) as cofactor. Cu(2+) serves as cofactor. Palmitoylated.

Its subcellular location is the cell outer membrane. The enzyme catalyses nitric oxide + Fe(III)-[cytochrome c] + H2O = Fe(II)-[cytochrome c] + nitrite + 2 H(+). Its function is as follows. Catalyzes the reduction of nitrite to nitric oxide (NO), probably with azurin as electron donor. Essential for growth and survival in oxygen-depleted environments. Can also provide protection against killing by normal human sera. This chain is Copper-containing nitrite reductase (aniA), found in Neisseria gonorrhoeae.